We begin with the raw amino-acid sequence, 297 residues long: HTH-type transcriptional regulator ArgP (297 aa).

In terms of domain architecture, HTH lysR-type spans 4–60 (PDYRTLQALDAVIRERGFERAAQKLCITQSAVSQRIKQLENMFGQPLLVRTVPPRPT). The H-T-H motif DNA-binding region spans 21-40 (FERAAQKLCITQSAVSQRIK).

It belongs to the LysR transcriptional regulatory family. Homodimer.

Controls the transcription of genes involved in arginine and lysine metabolism. The protein is HTH-type transcriptional regulator ArgP of Salmonella dublin (strain CT_02021853).